Here is a 422-residue protein sequence, read N- to C-terminus: MVDLIARDDSVDTCQASNGYNGHAGLRILAVFIILISSGLGVYFPILSSRYSFIRLPNWCFFIAKFFGSGVIVATAFVHLLQPAAEALGDECLGGTFAEYPWAFGICLMSLFLLFFTEIITHYFVAKTLGHDHGDHGEVTSIDVDAPSSGFVIRNMDSDPVSFNNEAAYSIHNDKTPYTTRNEEIVATPIKEKEPGSNVTNYDLEPGKTESLANELVPTSSHATNLASVPGKDHYSHENDHQDVSQLATRIEEEDKEQYLNQILAVFILEFGIIFHSVFVGLSLSVAGEEFETLFIVLTFHQMFEGLGLGTRVAETNWPESKKYMPWLMGLAFTLTSPIAVAVGIGVRHSWIPGSRRALIANGVFDSISSGILIYTGLVELMAHEFLYSNQFKGPDGLKKMLSAYLIMCCGAALMALLGKWA.

Residues 1 to 27 (MVDLIARDDSVDTCQASNGYNGHAGLR) are Extracellular-facing. A helical transmembrane segment spans residues 28-48 (ILAVFIILISSGLGVYFPILS). Over 49–60 (SRYSFIRLPNWC) the chain is Cytoplasmic. The chain crosses the membrane as a helical span at residues 61-81 (FFIAKFFGSGVIVATAFVHLL). The Extracellular segment spans residues 82–99 (QPAAEALGDECLGGTFAE). The helical transmembrane segment at 100-120 (YPWAFGICLMSLFLLFFTEII) threads the bilayer. Residues 121–262 (THYFVAKTLG…EEDKEQYLNQ (142 aa)) are Cytoplasmic-facing. A phosphoserine mark is found at serine 148, serine 149, serine 162, and serine 170. Threonine 188 bears the Phosphothreonine mark. A helical transmembrane segment spans residues 263-283 (ILAVFILEFGIIFHSVFVGLS). Residues 284 to 290 (LSVAGEE) are Extracellular-facing. A helical membrane pass occupies residues 291–311 (FETLFIVLTFHQMFEGLGLGT). At 312-326 (RVAETNWPESKKYMP) the chain is on the cytoplasmic side. The helical transmembrane segment at 327–347 (WLMGLAFTLTSPIAVAVGIGV) threads the bilayer. Topologically, residues 348–358 (RHSWIPGSRRA) are extracellular. A helical membrane pass occupies residues 359–379 (LIANGVFDSISSGILIYTGLV). The Cytoplasmic segment spans residues 380–400 (ELMAHEFLYSNQFKGPDGLKK). The helical transmembrane segment at 401–421 (MLSAYLIMCCGAALMALLGKW) threads the bilayer. Residue alanine 422 is a topological domain, extracellular.

This sequence belongs to the ZIP transporter (TC 2.A.5) family.

The protein localises to the membrane. Low-affinity zinc transport protein. Active in zinc-replete cells and is time-, temperature- and concentration-dependent and prefers zinc over other metals as its substrate. This Saccharomyces cerevisiae (strain ATCC 204508 / S288c) (Baker's yeast) protein is Zinc-regulated transporter 2 (ZRT2).